Consider the following 113-residue polypeptide: Class I hydrophobin POH3 (113 aa).

Residues M1–A21 form the signal peptide. Disulfide bonds link C32/C92, C39/C86, C40/C73, and C93/C106. Residue N110 is glycosylated (N-linked (GlcNAc...) asparagine).

Belongs to the fungal hydrophobin family. Self-assembles to form functional amyloid fibrils called rodlets. Self-assembly into fibrillar rodlets occurs spontaneously at hydrophobic:hydrophilic interfaces and the rodlets further associate laterally to form amphipathic monolayers. In terms of tissue distribution, expressionn is switched off in the fruiting bodies but abundantly expressed in the vegetative mycelium of both monokaryon and dikaryon.

Its subcellular location is the secreted. The protein localises to the cell wall. Aerial growth, conidiation, and dispersal of filamentous fungi in the environment rely upon a capability of their secreting small amphipathic proteins called hydrophobins (HPBs) with low sequence identity. Class I can self-assemble into an outermost layer of rodlet bundles on aerial cell surfaces, conferring cellular hydrophobicity that supports fungal growth, development and dispersal; whereas Class II form highly ordered films at water-air interfaces through intermolecular interactions but contribute nothing to the rodlet structure. POH3 is a class I hydrophobin that causes a large drop in the water-surface tension, enabling hyphae to breach the interface and grow into the air, in both the primary and the secondary mycelium. In the latter mycelium POH3 maight also play a role in the emergence of fruiting bodies. Secreted POH3 could also play a role in facilitating lignin degradation. The polypeptide is Class I hydrophobin POH3 (Pleurotus ostreatus (Oyster mushroom)).